Reading from the N-terminus, the 144-residue chain is Large ribosomal subunit protein uL15 (144 aa).

A disordered region spans residues 1-58 (MRLNELAPEPGSRPSAKRVGRGIGSGLGKTGGRGHKGLKSRSGGSVAPGFEGGQQPLA). Over residues 21–31 (RGIGSGLGKTG) the composition is skewed to gly residues.

This sequence belongs to the universal ribosomal protein uL15 family. Part of the 50S ribosomal subunit.

Functionally, binds to the 23S rRNA. This is Large ribosomal subunit protein uL15 from Marinobacter nauticus (strain ATCC 700491 / DSM 11845 / VT8) (Marinobacter aquaeolei).